The primary structure comprises 358 residues: Membrane-bound lytic murein transglycosylase C (358 aa).

The N-terminal stretch at 1-16 (MKKILALLVIAPLLVS) is a signal peptide. A lipid anchor (N-palmitoyl cysteine) is attached at Cys17. The S-diacylglycerol cysteine moiety is linked to residue Cys17.

The protein belongs to the transglycosylase Slt family.

The protein resides in the cell outer membrane. It catalyses the reaction Exolytic cleavage of the (1-&gt;4)-beta-glycosidic linkage between N-acetylmuramic acid (MurNAc) and N-acetylglucosamine (GlcNAc) residues in peptidoglycan, from either the reducing or the non-reducing ends of the peptidoglycan chains, with concomitant formation of a 1,6-anhydrobond in the MurNAc residue.. Murein-degrading enzyme. May play a role in recycling of muropeptides during cell elongation and/or cell division. The chain is Membrane-bound lytic murein transglycosylase C from Yersinia pseudotuberculosis serotype O:1b (strain IP 31758).